Consider the following 2587-residue polypeptide: Protein KINKY POLLEN (2587 aa).

Residues 1–27 form the signal peptide; sequence MAAFLVMFIFTIALFVALLWVFFKSLP. N-linked (GlcNAc...) asparagine glycosylation is present at N71. The disordered stretch occupies residues 103–124; sequence PSHSSKGPRKPKTRKSSSGGKG. The segment covering 108–117 has biased composition (basic residues); it reads KGPRKPKTRK. N-linked (GlcNAc...) asparagine glycans are attached at residues N262, N281, and N485. The segment at 270–290 is disordered; it reads SKGEVIDSSSGNTTSEKPPKQ. Residues 276–285 show a composition bias toward polar residues; sequence DSSSGNTTSE. The disordered stretch occupies residues 589 to 611; it reads GSSSKNKQEKGAHRSKPPSGRGT. A coiled-coil region spans residues 691–716; the sequence is TLNKEIQSTQVELETAKAIYQEFLEE. The segment at 784-814 is disordered; it reads QHGNRNPEEASTVTGDKQKEEPTTTPNSLDK. N-linked (GlcNAc...) asparagine glycosylation is found at N1155, N1250, N1281, and N1486. 3 disordered regions span residues 1571–1608, 1646–1673, and 1729–1797; these read HCSKPAQMSRTSSLSGSTDRVTSDNGTSTSDGTEKHPD, VDARSTKEKQSEPEENSHSDPSDDDGYN, and EGNQ…PEEE. The segment covering 1576–1590 has biased composition (polar residues); that stretch reads AQMSRTSSLSGSTDR. N1595 carries N-linked (GlcNAc...) asparagine glycosylation. Positions 1646–1666 are enriched in basic and acidic residues; it reads VDARSTKEKQSEPEENSHSDP. The segment covering 1746 to 1760 has biased composition (polar residues); it reads KQPSTGSGNLASQSK. 5 N-linked (GlcNAc...) asparagine glycosylation sites follow: N1861, N1951, N1981, N2036, and N2278. Residues 2006–2036 are a coiled coil; sequence IEEVELAKIELEAKERDRMMLLDDIRKLTQN. A compositionally biased stretch (polar residues) spans 2274-2287; that stretch reads QGSKNQSLKSSTIR. 3 disordered regions span residues 2274-2299, 2319-2360, and 2442-2469; these read QGSKNQSLKSSTIRGSGRELRRTSSF, SMEH…KKSR, and KDDIGLRDKDESGRTDQESGAWVKRPGD. 4 stretches are compositionally biased toward basic and acidic residues: residues 2289-2299, 2322-2336, 2343-2359, and 2442-2458; these read SGRELRRTSSF, HQGESSKGKLKDSKT, SVHEEKKGEKSLEDKKS, and KDDIGLRDKDESGRTDQ. 2 N-linked (GlcNAc...) asparagine glycosylation sites follow: N2513 and N2544. A disordered region spans residues 2533 to 2587; it reads IRRHSKKFQNQNTTKGSKKTQLSPTLSPPKEEDQYESDSSSGSSAYEEFLDQNQI. Residues 2540–2557 are compositionally biased toward polar residues; the sequence is FQNQNTTKGSKKTQLSPT. Low complexity predominate over residues 2569–2579; that stretch reads SDSSSGSSAYE.

It belongs to the SABRE family. Mostly expressed in pollen and roots, especially in tip-growing cells, but also present in seedlings, stems, leaves, buds, flowers, siliques and seeds.

It localises to the secreted. It is found in the golgi apparatus. Functionally, may be involved in membrane trafficking. Required for tip growth in pollen tubes and root hairs. The protein is Protein KINKY POLLEN of Arabidopsis thaliana (Mouse-ear cress).